A 482-amino-acid chain; its full sequence is MVESQKAMPQPKMGRIRRIHFVGIGGVGMCGIAEVLLNLGYEVSGSDLKASPVTERLESFGAEIFVGHRAENAATADVLVVSSAINPANPEVATALERRIPVVPRAEMLAELMRYRHGVAVAGTHGKTTTTSLLASVFAAGGLDPTFVIGGRLTAAGTNAQLGTSRYLIAEADESDASFLHLQPMVAVVTNIDADHMATYEGDFNKLKKTFVEFLHNLPFYGLAVMCLDDPVVREILPQVKRPTVTYGFSEEADIRAINVRQQGMQTHFTVLRRDREPLEVSVNMPGNHNVLNALATIAIATDEGITDEAIVQGLSGFQGVGRRFQVYGELPVEGGSVMLVDDYGHHPTEVAAVIKAVRGGWPSRRLVIVYQPHRYSRTRDLYDDFVQVLGDANVLLLMEVYPAGEEPIPGADSRQLCHSIRQRGKLDPIYIERGVELAPLVKPLLRAGDILICQGAGDVGGLAPQLMKSPLFAGAKQEKSK.

Residue 123-129 (GTHGKTT) participates in ATP binding.

The protein belongs to the MurCDEF family.

The protein resides in the cytoplasm. It carries out the reaction UDP-N-acetyl-alpha-D-muramate + L-alanine + ATP = UDP-N-acetyl-alpha-D-muramoyl-L-alanine + ADP + phosphate + H(+). It participates in cell wall biogenesis; peptidoglycan biosynthesis. Its function is as follows. Cell wall formation. The chain is UDP-N-acetylmuramate--L-alanine ligase from Pseudomonas putida (strain ATCC 700007 / DSM 6899 / JCM 31910 / BCRC 17059 / LMG 24140 / F1).